Consider the following 368-residue polypeptide: uncharacterized protein (368 aa).

The protein belongs to the ornithine cyclodeaminase/mu-crystallin family.

This is an uncharacterized protein from Dictyostelium discoideum (Social amoeba).